The sequence spans 102 residues: uncharacterized protein (102 aa).

3 consecutive transmembrane segments (helical) span residues Met1–Val21, Ser42–Val62, and Ser68–Val88.

It is found in the membrane. This is an uncharacterized protein from Saccharomyces cerevisiae (strain ATCC 204508 / S288c) (Baker's yeast).